A 243-amino-acid chain; its full sequence is CD48 antigen (243 aa).

The first 26 residues, 1 to 26 (MCSRGWDSCLALELLLLPLSLLVTSI), serve as a signal peptide directing secretion. Ig-like C2-type domains are found at residues 29–127 (HLVH…KLQV) and 132–212 (PKPV…VCLS). N-linked (GlcNAc...) asparagine glycans are attached at residues asparagine 40, asparagine 44, asparagine 104, asparagine 162, and asparagine 189. Cysteine 154 and cysteine 196 are joined by a disulfide. Serine 220 carries the GPI-anchor amidated serine lipid modification. The propeptide at 221–243 (FGVEWIASWLVVTVPTILGLLLT) is removed in mature form.

In terms of assembly, interacts with CD2. Interacts with CD244; this interaction is possible not only on different cells (trans interaction) but also on the same cell (cis interaction). Interacts with LCK. As to expression, widely expressed on all hematopoietic cells.

The protein resides in the cell membrane. Its subcellular location is the membrane raft. The protein localises to the secreted. Glycosylphosphatidylinositol (GPI)-anchored cell surface glycoprotein that interacts via its N-terminal immunoglobulin domain with cell surface receptors including CD244/2B4 or CD2 to regulate immune cell function and activation. Participates in T-cell signaling transduction by associating with CD2 and efficiently bringing the Src family protein kinase LCK and LAT to the TCR/CD3 complex. In turn, promotes LCK phosphorylation and subsequent activation. Induces the phosphorylation of the cytoplasmic immunoreceptortyrosine switch motifs (ITSMs) of CD244 initiating a series of signaling events that leads to the generation of the immunological synapse and the directed release of cytolytic granules containing perforin and granzymes by T-lymphocytes and NK-cells. This Homo sapiens (Human) protein is CD48 antigen (CD48).